The sequence spans 90 residues: Large ribosomal subunit protein bL27 (90 aa).

Residues Met1–Leu21 form a disordered region.

Belongs to the bacterial ribosomal protein bL27 family.

The sequence is that of Large ribosomal subunit protein bL27 from Laribacter hongkongensis (strain HLHK9).